The sequence spans 132 residues: Large ribosomal subunit protein bL17 (132 aa).

This sequence belongs to the bacterial ribosomal protein bL17 family. Part of the 50S ribosomal subunit. Contacts protein L32.

This is Large ribosomal subunit protein bL17 from Variovorax paradoxus (strain S110).